The following is a 249-amino-acid chain: Aspartate/glutamate leucyltransferase (249 aa).

It belongs to the R-transferase family. Bpt subfamily.

It localises to the cytoplasm. It carries out the reaction N-terminal L-glutamyl-[protein] + L-leucyl-tRNA(Leu) = N-terminal L-leucyl-L-glutamyl-[protein] + tRNA(Leu) + H(+). The catalysed reaction is N-terminal L-aspartyl-[protein] + L-leucyl-tRNA(Leu) = N-terminal L-leucyl-L-aspartyl-[protein] + tRNA(Leu) + H(+). Functions in the N-end rule pathway of protein degradation where it conjugates Leu from its aminoacyl-tRNA to the N-termini of proteins containing an N-terminal aspartate or glutamate. The chain is Aspartate/glutamate leucyltransferase from Brucella canis (strain ATCC 23365 / NCTC 10854 / RM-666).